The sequence spans 528 residues: Equilibrative nucleoside transporter 4 (528 aa).

Residues 1–68 are Extracellular-facing; sequence MGSIGSQRLK…EEPVPDDRYH (68 aa). The chain crosses the membrane as a helical span at residues 69–89; it reads AIYFAMLLAGVGFLLPYNSFI. Topologically, residues 90–101 are cytoplasmic; it reads TDVDYLHHKYPG. Residues 102 to 122 traverse the membrane as a helical segment; that stretch reads TSIVFDMSLTYILVALAAVLL. The Extracellular portion of the chain corresponds to 123–139; that stretch reads NNVVVERLNLHTRITTG. Residues 140-160 form a helical membrane-spanning segment; the sequence is YLLALGPLLFISICDVWLQLF. Residues 161 to 166 are Cytoplasmic-facing; that stretch reads SHDQAY. Residues 167–187 form a helical membrane-spanning segment; that stretch reads AINLAAVGTVAFGCTVQQSSF. Over 188 to 231 the chain is Extracellular; it reads YGYTGLLPKRYTQGVMTGESTAGVMISLSRILTKLLLPDERAST. Residues 232–252 traverse the membrane as a helical segment; sequence IIFFLVSAGLELLCFLLHLLV. Residues 253 to 346 are Cytoplasmic-facing; sequence RRSRFVLYYT…LLLHRYVVAR (94 aa). Residues 347-367 traverse the membrane as a helical segment; it reads VIWADMLSIAVTYFITLCLFP. Residues 368–376 lie on the Extracellular side of the membrane; sequence GLESEIRHC. A helical membrane pass occupies residues 377–397; the sequence is VLGEWLPILVMAVFNLSDFVG. At 398–411 the chain is on the cytoplasmic side; sequence KILAALPVEWRGTH. A helical membrane pass occupies residues 412–432; that stretch reads LLACSCLRVVFIPLFILCVYP. Residues 433–445 lie on the Extracellular side of the membrane; sequence SGMPALRHPAWPC. Residues 446–466 traverse the membrane as a helical segment; sequence VFSLLMGISNGYFGSVPMILA. The Cytoplasmic portion of the chain corresponds to 467–481; the sequence is AGKVSPKQRELAGNT. Residues 482 to 504 form a helical membrane-spanning segment; it reads MTVSYMSGLTLGSAVAYCTYSLT. The Extracellular segment spans residues 505 to 528; the sequence is RDAHGSCFQTATAAAANDSIPVGP. N-linked (GlcNAc...) asparagine glycosylation is present at N521.

This sequence belongs to the SLC29A/ENT transporter (TC 2.A.57) family. N-glycosylated. Expressed in heart. Expressed in choroid plexus.

Its subcellular location is the cell membrane. The protein localises to the apical cell membrane. The enzyme catalyses serotonin(out) = serotonin(in). It carries out the reaction dopamine(out) = dopamine(in). The catalysed reaction is (R)-noradrenaline(out) = (R)-noradrenaline(in). It catalyses the reaction (R)-adrenaline(out) = (R)-adrenaline(in). The enzyme catalyses histamine(out) = histamine(in). It carries out the reaction tyramine(in) = tyramine(out). The catalysed reaction is guanidine(out) = guanidine(in). It catalyses the reaction adenine(out) = adenine(in). The enzyme catalyses adenosine(in) = adenosine(out). With respect to regulation, activated at acidic pH. Functionally, electrogenic voltage-dependent transporter that mediates the transport of a variety of endogenous bioactive amines, cationic xenobiotics and drugs. Utilizes the physiologic inside-negative membrane potential as a driving force to facilitate cellular uptake of organic cations. Functions as a Na(+)- and Cl(-)-independent bidirectional transporter. Substrate transport is pH-dependent and enhanced under acidic condition, which is most likely the result of allosteric changes in the transporter structure. Implicated in monoamine neurotransmitters uptake such as serotonin, dopamine, adrenaline/epinephrine, noradrenaline/norepinephrine, histamine and tyramine, thereby supporting a role in homeostatic regulation of aminergic neurotransmission in the central nervous system. Also responsible for the uptake of bioactive amines and drugs through the blood-cerebrospinal fluid (CSF) barrier, from the CSF into choroid plexus epithelial cells, thereby playing a significant role in the clearance of cationic neurotoxins, xenobiotics and metabolic waste in the brain. Involved in bidirectional transport of the purine nucleoside adenosine and plays a role in the regulation of extracellular adenosine concentrations in cardiac tissues, in particular during ischemia. May be involved in organic cation uptake from the tubular lumen into renal tubular cells, thereby contributing to organic cation reabsorption in the kidney. Also transports adenine and guanidine. In Mus musculus (Mouse), this protein is Equilibrative nucleoside transporter 4.